An 86-amino-acid polypeptide reads, in one-letter code: Small ribosomal subunit protein uS17 (86 aa).

It belongs to the universal ribosomal protein uS17 family. As to quaternary structure, part of the 30S ribosomal subunit.

Functionally, one of the primary rRNA binding proteins, it binds specifically to the 5'-end of 16S ribosomal RNA. The sequence is that of Small ribosomal subunit protein uS17 from Streptococcus equi subsp. equi (strain 4047).